The chain runs to 675 residues: PTS system glucose-specific EIICBA component (675 aa).

Residues 3–414 (KKFFGQLQRI…FNFKTPGRED (412 aa)) enclose the PTS EIIC type-1 domain. The next 11 helical transmembrane spans lie at 16–36 (LMLP…GNAF), 63–83 (AGGI…AIGL), 89–109 (VAAI…GMFL), 126–146 (VLGI…GALA), 170–190 (FVPI…AIIW), 199–219 (AFSE…FGFI), 273–293 (FMQG…LAIY), 303–323 (VVAG…ITEP), 329–349 (LFVA…SFLI), 355–375 (LHLG…GILP), and 383–403 (VIPV…FLIV). One can recognise a PTS EIIB type-1 domain in the interval 425-506 (SELPFKVLDA…QQIMDGKITS (82 aa)). The Phosphocysteine intermediate; for EIIB activity role is filled by cysteine 447. Residues 547–651 (DKVFSEKMMG…STITPIVVTN (105 aa)) form the PTS EIIA type-1 domain. Histidine 599 (tele-phosphohistidine intermediate; for EIIA activity) is an active-site residue.

Its subcellular location is the cell membrane. It carries out the reaction N(pros)-phospho-L-histidyl-[protein] + D-glucose(out) = D-glucose 6-phosphate(in) + L-histidyl-[protein]. Inhibited by 2-deoxyglucose and methyl beta-D-glucoside, but not by methyl alpha-D-glucoside, p-nitrophenyl alpha-D-glucoside, o-nitrophenyl beta-D-glucoside and salicin. Its function is as follows. The phosphoenolpyruvate-dependent sugar phosphotransferase system (sugar PTS), a major carbohydrate active transport system, catalyzes the phosphorylation of incoming sugar substrates concomitantly with their translocation across the cell membrane. This system is involved in glucose transport. Cannot transport galactose, fructose, mannose, cellobiose, sucrose, maltose, lactose, melibiose and trehalose, as well as N-acetylglucosamine. This chain is PTS system glucose-specific EIICBA component (ptsG), found in Staphylococcus carnosus (strain TM300).